The primary structure comprises 495 residues: UDP-N-acetylmuramoyl-L-alanyl-D-glutamate--2,6-diaminopimelate ligase (495 aa).

UDP-N-acetyl-alpha-D-muramoyl-L-alanyl-D-glutamate-binding positions include Leu-27, Ser-29, and 44–46; that span reads HQA. 116–122 serves as a coordination point for ATP; it reads GTNGKTT. Residues Asn-157, 158-159, Ser-185, Gln-191, and Arg-193 contribute to the UDP-N-acetyl-alpha-D-muramoyl-L-alanyl-D-glutamate site; that span reads TT. Residue Lys-225 is modified to N6-carboxylysine. Residues Arg-390, 414-417, Gly-465, and Glu-469 each bind meso-2,6-diaminopimelate; that span reads DNPR. The Meso-diaminopimelate recognition motif signature appears at 414-417; sequence DNPR.

It belongs to the MurCDEF family. MurE subfamily. Mg(2+) serves as cofactor. In terms of processing, carboxylation is probably crucial for Mg(2+) binding and, consequently, for the gamma-phosphate positioning of ATP.

Its subcellular location is the cytoplasm. The catalysed reaction is UDP-N-acetyl-alpha-D-muramoyl-L-alanyl-D-glutamate + meso-2,6-diaminopimelate + ATP = UDP-N-acetyl-alpha-D-muramoyl-L-alanyl-gamma-D-glutamyl-meso-2,6-diaminopimelate + ADP + phosphate + H(+). Its pathway is cell wall biogenesis; peptidoglycan biosynthesis. Catalyzes the addition of meso-diaminopimelic acid to the nucleotide precursor UDP-N-acetylmuramoyl-L-alanyl-D-glutamate (UMAG) in the biosynthesis of bacterial cell-wall peptidoglycan. This Escherichia coli O157:H7 protein is UDP-N-acetylmuramoyl-L-alanyl-D-glutamate--2,6-diaminopimelate ligase.